The chain runs to 156 residues: 6,7-dimethyl-8-ribityllumazine synthase (156 aa).

5-amino-6-(D-ribitylamino)uracil contacts are provided by residues Phe-22, 57 to 59 (AYE), and 81 to 83 (TVI). (2S)-2-hydroxy-3-oxobutyl phosphate is bound at residue 86–87 (GT). His-89 (proton donor) is an active-site residue. 5-amino-6-(D-ribitylamino)uracil is bound at residue Phe-114. Arg-128 provides a ligand contact to (2S)-2-hydroxy-3-oxobutyl phosphate.

The protein belongs to the DMRL synthase family. As to quaternary structure, forms an icosahedral capsid composed of 60 subunits, arranged as a dodecamer of pentamers.

It carries out the reaction (2S)-2-hydroxy-3-oxobutyl phosphate + 5-amino-6-(D-ribitylamino)uracil = 6,7-dimethyl-8-(1-D-ribityl)lumazine + phosphate + 2 H2O + H(+). It functions in the pathway cofactor biosynthesis; riboflavin biosynthesis; riboflavin from 2-hydroxy-3-oxobutyl phosphate and 5-amino-6-(D-ribitylamino)uracil: step 1/2. Catalyzes the formation of 6,7-dimethyl-8-ribityllumazine by condensation of 5-amino-6-(D-ribitylamino)uracil with 3,4-dihydroxy-2-butanone 4-phosphate. This is the penultimate step in the biosynthesis of riboflavin. The chain is 6,7-dimethyl-8-ribityllumazine synthase from Edwardsiella ictaluri (strain 93-146).